The chain runs to 188 residues: Mitochondrial import inner membrane translocase subunit TIM23-2 (188 aa).

4 helical membrane-spanning segments follow: residues 64 to 84 (TGTAYLGGSVAGASVGVITGV), 112 to 131 (GNRIGIIGLVYAGIESGIVA), 138 to 154 (VWTSVVAGLGTGAVCRA), and 161 to 178 (AAVAGALGGLAAGAVVAG).

Belongs to the Tim17/Tim22/Tim23 family. As to quaternary structure, homomultimer. Component of the TIM17:23 complex at least composed of TIM23, TIM17 and TIM50. The complex interacts with the TIM44 component of the PAM complex. Also part of the NADH-ubiquinone oxidoreductase complex I. Interacts with OEP163, TIM17-2, TIM21, TIM50 and MPPA2. In terms of tissue distribution, expressed in roots and young cotyledons. Detected in leaves and flowers.

The protein localises to the mitochondrion inner membrane. Its function is as follows. Essential component of the TIM17:23 complex, a complex that mediates the translocation of transit peptide-containing proteins across the mitochondrial inner membrane. Links the inner and outer membranes. This chain is Mitochondrial import inner membrane translocase subunit TIM23-2 (TIM23-2), found in Arabidopsis thaliana (Mouse-ear cress).